The sequence spans 105 residues: UPF0235 protein RAF_ORF1191 (105 aa).

It belongs to the UPF0235 family.

The sequence is that of UPF0235 protein RAF_ORF1191 from Rickettsia africae (strain ESF-5).